The sequence spans 249 residues: Bacillaene synthase decarboxylase PksI (249 aa).

His230 is an active-site residue.

Belongs to the enoyl-CoA hydratase/isomerase family. Homotrimer. Does not form a heterotrimeric complex with PksH.

The protein resides in the cytoplasm. It functions in the pathway antibiotic biosynthesis; bacillaene biosynthesis. Its function is as follows. Involved in some intermediate steps for the synthesis of the antibiotic polyketide bacillaene which is involved in secondary metabolism. Catalyzes the decarboxylation of the 3-methylglutaconyl group tethered to PksL to a 3-methylcrotonyl moiety. The protein is Bacillaene synthase decarboxylase PksI (pksI) of Bacillus subtilis (strain 168).